The following is a 624-amino-acid chain: Capsid protein p87 (624 aa).

Disordered stretches follow at residues 183 to 208, 254 to 326, and 341 to 410; these read FADT…QDFD, STPL…TPVS, and TDLP…QKRR. The stretch at 256 to 268 is one A-1 repeat; sequence PLQEYQMPPQTPA. Positions 256-280 are 2 X 13 AA tandem repeats, motif A; sequence PLQEYQMPPQTPAPLQDQMPPQTPA. The stretch at 269-280 is one A-2 repeat; sequence PLQDQMPPQTPA. Residues 279–324 show a composition bias toward low complexity; the sequence is PAYATPAQQPSQPTPAQTPAQQPSQPTPAYVTSAQTPAQQPSQPTP. One copy of the B-1 repeat lies at 283 to 293; sequence TPAQQPSQPTP. Residues 283–324 form a 3 X 11 AA repeats, motif B region; that stretch reads TPAQQPSQPTPAQTPAQQPSQPTPAYVTSAQTPAQQPSQPTP. The B-2 repeat unit spans residues 296–306; sequence TPAQQPSQPTP. A B-3 repeat occupies 314–324; that stretch reads TPAQQPSQPTP.

It is found in the virion. The polypeptide is Capsid protein p87 (P87) (Orgyia pseudotsugata multicapsid polyhedrosis virus (OpMNPV)).